The chain runs to 321 residues: Cilia- and flagella-associated protein 161 (321 aa).

Residues 275–321 (LSTMLDLPKPPAEDTRALEQEREQVSDPGARSTPDARGCVPQCTLPM) form a disordered region. Residues 285–299 (PAEDTRALEQEREQV) show a composition bias toward basic and acidic residues.

In terms of assembly, microtubule inner protein component of sperm flagellar doublet microtubules. In terms of tissue distribution, expressed in trachea multiciliated cells.

It localises to the cytoplasm. It is found in the cytoskeleton. The protein localises to the cilium axoneme. The protein resides in the flagellum axoneme. Microtubule inner protein (MIP) part of the dynein-decorated doublet microtubules (DMTs) in cilia axoneme, which is required for motile cilia beating. The polypeptide is Cilia- and flagella-associated protein 161 (Bos taurus (Bovine)).